The sequence spans 887 residues: MNSVNSIRSTFLDYFQLNGHKIVSSSPLVPRNDPTLMFTNAGMVQFKNVFTGLEQRPYKQATTAQKCVRAGGKHNDLDNVGYTARHHTFFEMLGNFSFGDYFKEEAIFLSWNLLTKEFCLPEDKLLVTVYHNDDVSTELWRKISGLPDEKIVRIATADNFWAMGDTGPCGPCSEIFYDHGDEIWGGPPGSAYEDGDRFIEIWNLVFMQYEQVNKEKRVELPHPSIDTGMGLERIAAVLQGGHDNYDIDLFRALIAVSQEITGVKATGDFIASHRVIADHLRSSAFLIADGVLPSNEGRGYVLRRIMRRAMRHAHLLGAKEPLMWRLLPVLIHEMGQAYPELVRAESLISETLKLEEIRFRKTLERGLGLLSEASTDLKEGDHLNGEIAFKLYDTYGFPLDLTQDALRCRGISVDVAAFNKAMEGQKAKARANWSGSGETVTEAIWFSVRDQLGATEFLGYETEKSEGILTALVRDGEIVDDISSGQKAILVVNQTPFYGESGGQIGDSGTISGKNFVFEVHDTQKKADGVFIHIGEVKSGQARMSECVELTVDGVRRKKIRVNHSATHLLHEALRQVLGSHVTQKGSLVSPDRLRFDFSHPKSVSLEELEKIEDLANEIVLQNSEVTTRLMLVDDAISEGAMALFGEKYGDEVRVVSMGNRLEKGKLKSRWSIELCGGTHVERTGDIGLIHIVSESSVAAGVRRIEALTGTAARLYLSRQDARVHEIADLLKTSATDVEERVRILLEDRRKLEKELNDERKKSVLSGGIVKSDQEDITIINGISFMGRVVKNISPRDLKTLVDSGKKKIGSGVVAFIGVSEDGKGSAVLGVTDDLTHKLNAVDLVRILSGILGGQGGGGRPDMAQSGGPKGNKADEALAVLKASLEG.

Zn(2+) contacts are provided by H564, H568, C676, and H680. Positions 854–873 are disordered; the sequence is GQGGGGRPDMAQSGGPKGNK.

Belongs to the class-II aminoacyl-tRNA synthetase family. Zn(2+) serves as cofactor.

It is found in the cytoplasm. It carries out the reaction tRNA(Ala) + L-alanine + ATP = L-alanyl-tRNA(Ala) + AMP + diphosphate. Its function is as follows. Catalyzes the attachment of alanine to tRNA(Ala) in a two-step reaction: alanine is first activated by ATP to form Ala-AMP and then transferred to the acceptor end of tRNA(Ala). Also edits incorrectly charged Ser-tRNA(Ala) and Gly-tRNA(Ala) via its editing domain. This chain is Alanine--tRNA ligase, found in Bartonella henselae (strain ATCC 49882 / DSM 28221 / CCUG 30454 / Houston 1) (Rochalimaea henselae).